A 456-amino-acid polypeptide reads, in one-letter code: 3-isopropylmalate dehydratase large subunit (456 aa).

Cys336, Cys396, and Cys399 together coordinate [4Fe-4S] cluster.

Belongs to the aconitase/IPM isomerase family. LeuC type 1 subfamily. Heterodimer of LeuC and LeuD. The cofactor is [4Fe-4S] cluster.

It carries out the reaction (2R,3S)-3-isopropylmalate = (2S)-2-isopropylmalate. The protein operates within amino-acid biosynthesis; L-leucine biosynthesis; L-leucine from 3-methyl-2-oxobutanoate: step 2/4. In terms of biological role, catalyzes the isomerization between 2-isopropylmalate and 3-isopropylmalate, via the formation of 2-isopropylmaleate. This is 3-isopropylmalate dehydratase large subunit from Staphylococcus haemolyticus (strain JCSC1435).